A 91-amino-acid chain; its full sequence is uncharacterized protein (91 aa).

A disordered region spans residues 71 to 91 (EANDRPSKKCGSGNLRVEKLV).

This is an uncharacterized protein from Archaeoglobus fulgidus (strain ATCC 49558 / DSM 4304 / JCM 9628 / NBRC 100126 / VC-16).